The primary structure comprises 395 residues: Multidrug resistance protein MdtL (395 aa).

12 helical membrane passes run 4-24, 42-62, 69-89, 93-113, 131-151, 158-178, 217-237, 247-267, 271-291, 295-315, 333-353, and 358-378; these read FLLC…MYLV, IAFS…GKIA, PVAI…SRAS, LFLS…VVAF, LLNG…HLIM, SLFY…LFIL, VSVI…VMGF, ALTA…LGLF, TLML…SLAH, VTLF…GVAM, LGIA…ILGI, and MLIG…FSVA.

The protein belongs to the major facilitator superfamily. DHA1 family. MdtL (TC 2.A.1.2.22) subfamily.

The protein localises to the cell inner membrane. The protein is Multidrug resistance protein MdtL of Salmonella agona (strain SL483).